Here is a 511-residue protein sequence, read N- to C-terminus: Glucose-6-phosphate 1-dehydrogenase, cytoplasmic isoform (511 aa).

Residues 36–43 (GASGDLAK), Arg-71, Tyr-151, and Lys-178 each bind NADP(+). D-glucose 6-phosphate contacts are provided by residues Lys-178, 208-212 (HYLGK), Glu-246, and Asp-265. His-270 functions as the Proton acceptor in the catalytic mechanism. Lys-353 lines the NADP(+) pocket. D-glucose 6-phosphate-binding residues include Lys-356 and Arg-361. NADP(+) contacts are provided by Lys-362, Arg-366, and Arg-390. Residue Gln-392 participates in D-glucose 6-phosphate binding. NADP(+) contacts are provided by residues 398–400 (YMK), 418–420 (DLS), Arg-484, and Trp-506.

Belongs to the glucose-6-phosphate dehydrogenase family. In terms of assembly, homotetramer. Found in tubers, stolons, roots, and flower buds.

Its subcellular location is the cytoplasm. The catalysed reaction is D-glucose 6-phosphate + NADP(+) = 6-phospho-D-glucono-1,5-lactone + NADPH + H(+). Its pathway is carbohydrate degradation; pentose phosphate pathway; D-ribulose 5-phosphate from D-glucose 6-phosphate (oxidative stage): step 1/3. With respect to regulation, regulated by metabolites. Functionally, catalyzes the rate-limiting step of the oxidative pentose-phosphate pathway, which represents a route for the dissimilation of carbohydrates besides glycolysis. The main function of this enzyme is to generate NADPH for reductive biosyntheses. In Solanum tuberosum (Potato), this protein is Glucose-6-phosphate 1-dehydrogenase, cytoplasmic isoform (G6PDH).